A 606-amino-acid polypeptide reads, in one-letter code: Probable translation initiation factor IF-2 (606 aa).

The tr-type G domain maps to 11–230 (IRQPIVVVLG…LTGLVQRFMK (220 aa)). Residues 20–27 (GHVDHGKT) are G1. 20-27 (GHVDHGKT) is a GTP binding site. Residues 45-49 (EITQH) form a G2 region. Positions 85-88 (DTPG) are G3. GTP is bound by residues 85-89 (DTPGH) and 139-142 (NKID). The segment at 139–142 (NKID) is G4. A G5 region spans residues 207–209 (SAK).

It belongs to the TRAFAC class translation factor GTPase superfamily. Classic translation factor GTPase family. IF-2 subfamily.

In terms of biological role, function in general translation initiation by promoting the binding of the formylmethionine-tRNA to ribosomes. Seems to function along with eIF-2. The protein is Probable translation initiation factor IF-2 of Staphylothermus marinus (strain ATCC 43588 / DSM 3639 / JCM 9404 / F1).